The chain runs to 323 residues: Transcription factor LUX (323 aa).

Disordered regions lie at residues 1–25, 53–139, and 267–298; these read MGEE…WEMG, ERSR…DLSG, and GYHH…ESNP. The span at 65-87 shows a compositional bias: low complexity; sequence SETTLSSLRGGSSGPNTSSSNNN. A DNA-binding region (myb-like GARP) is located at residues 139-200; the sequence is GKTLKRPRLV…HLQKYRLYLK (62 aa).

Interacts with ELF3 and forms a complex with ELF3 and ELF4.

The protein localises to the nucleus. Its function is as follows. Transcription factor that is essential for the generation of the circadian clock oscillation. Is necessary for activation of CCA1 and LHY expression. Is coregulated with TOC1 and seems to be repressed by CCA1 and LHY by direct binding of these proteins to the evening element in the LUX promoter. Directly regulates the expression of PRR9, a major component of the morning transcriptional feedback circuit, by binding specific sites on PRR9 promoter. Binds to its own promoter, inducing a negative auto-regulatory feedback loop within the core clock. Binds to ELF3 and associates with ELF4 in a diurnal complex which is required for the expression of the growth-promoting transcription factors PIF4 and PIF5 and subsequent hypocotyl growth in the early evening. The protein is Transcription factor LUX (LUX) of Arabidopsis thaliana (Mouse-ear cress).